The chain runs to 88 residues: Cell division topological specificity factor (88 aa).

It belongs to the MinE family.

In terms of biological role, prevents the cell division inhibition by proteins MinC and MinD at internal division sites while permitting inhibition at polar sites. This ensures cell division at the proper site by restricting the formation of a division septum at the midpoint of the long axis of the cell. The chain is Cell division topological specificity factor from Escherichia coli (strain SMS-3-5 / SECEC).